We begin with the raw amino-acid sequence, 493 residues long: E3 ubiquitin-protein ligase TRIM35 (493 aa).

An N-acetylmethionine modification is found at Met-1. Ser-4 and Ser-8 each carry phosphoserine. Residues 21 to 61 (CAVCYDPFRDAVTLRCGHNFCRGCVSRCWEVQVSPTCPVCK) form an RING-type zinc finger. The B box-type zinc finger occupies 96–137 (RFSRVCRLHRGQLSLFCLEDKELLCCSCQADPRHQGHRVQPV). Positions 101, 104, 123, and 129 each coordinate Zn(2+). Positions 210-251 (AEETRQKQLLADEKMKQLTEETEVLAHEIERLQMEMKEDDVS) form a coiled coil. The 204-residue stretch at 284-487 (LGSLQYRVWK…LRICPLHISV (204 aa)) folds into the B30.2/SPRY domain.

This sequence belongs to the TRIM/RBCC family. As to quaternary structure, interacts with PKM isoform M2, but not isoform M1; this interaction may compete with that between PKM and FGFR1, and hence reduces FGFR1-dependent tyrosine phosphorylation of PKM. Interacts with IRF7; this interaction promotes IRF7 proteasomal degradation. Interacts with TRAF3; this interaction promotes TRAF3 activation.

It localises to the cytoplasm. It is found in the nucleus. The enzyme catalyses S-ubiquitinyl-[E2 ubiquitin-conjugating enzyme]-L-cysteine + [acceptor protein]-L-lysine = [E2 ubiquitin-conjugating enzyme]-L-cysteine + N(6)-ubiquitinyl-[acceptor protein]-L-lysine.. The protein operates within protein modification; protein ubiquitination. E3 ubiquitin-protein ligase that participates in multiple biological processes including cell death, glucose metabolism, and in particular, the innate immune response. Mediates 'Lys-63'-linked polyubiquitination of TRAF3 thereby promoting type I interferon production via RIG-I signaling pathway. Can also catalyze 'Lys-48'-linked polyubiquitination and proteasomal degradation of viral proteins such as influenza virus PB2. Acts as a negative feedback regulator of TLR7- and TLR9-triggered signaling. Mechanistically, promotes the 'Lys-48'-linked ubiquitination of IRF7 and induces its degradation via a proteasome-dependent pathway. Reduces FGFR1-dependent tyrosine phosphorylation of PKM, inhibiting PKM-dependent lactate production, glucose metabolism, and cell growth. This is E3 ubiquitin-protein ligase TRIM35 (TRIM35) from Homo sapiens (Human).